Consider the following 1886-residue polypeptide: Polyprotein P3 (1886 aa).

Disordered regions lie at residues 1–24, 420–466, and 478–529; these read MATRRLPAVTQTDGSRTATESGVP, RCDS…MQDD, and RMKK…NQPE. Positions 9–20 are enriched in polar residues; sequence VTQTDGSRTATE. A compositionally biased stretch (low complexity) spans 488–498; that stretch reads QQALSSQAQEE. The CCHC-type zinc finger occupies 879–896; sequence CKCYICGQEGHYANQCRN. The region spanning 1215-1292 is the Peptidase A2 domain; that stretch reads INAIVDTGAT…GLSPGIQMII (78 aa). Asp1220 serves as the catalytic For protease activity. Residues 1425–1615 form the Reverse transcriptase domain; it reads LLQMKVIRPS…PEIDFLGASL (191 aa). One can recognise an RNase H type-1 domain in the interval 1706-1841; sequence KDSFIIIETD…ADALSRMINF (136 aa). Residues Asp1715, Glu1758, Asp1784, and Asp1833 each contribute to the Mg(2+) site.

Polyprotein P3 is presumably proteolytically cleaved into several chains by viral protease.

The catalysed reaction is Endonucleolytic cleavage to 5'-phosphomonoester.. It carries out the reaction DNA(n) + a 2'-deoxyribonucleoside 5'-triphosphate = DNA(n+1) + diphosphate. Capsid protein self assembles to form a bacilliform capsid about 90-900 nm in length. The capsid encapsulates the genomic dsDNA. Following virus entry into host cell, provides nuclear import of the viral genome. Virus particles do not enter the nucleus, but are targeted to the nuclear membrane through the interaction with host importins. The protein is Polyprotein P3 of Commelina yellow mottle virus (CoYMV).